The following is a 1465-amino-acid chain: MSDLFAKLMDQIEMPLDMRRSSAFSSADIIEVKVHSVSRLWEFHFAFAAVLPIATYRELHDRLIRTFEAADIKVTFDIQAAQVDYSDDLLQAYYQEAFEHAPCNSASFKSSFSKLKVTYEDDKLIIAAPGFVNNDHFRNNHLPNLVKQLEAFGFGTLTIDMVSDQEMTEHLTKDFVSSRQALVKKAVQDNLEAQKSLEAMMPPVEEATPAPKFDYKERAAKRQAGFEKATITPMIEIETEENRIVFEGMVFDVERKTTRTGRHIINFKMTDYTSSFALQKWAKDDEELRKFDMIAKGAWLRVQGNIETNPFTKSLTMNVQQVKEIVHHDRKDLMPEGQKRVELHAHTNMSTMDALPTVESLIDTAAKWGHKAVAITDHANVQSFPHGYHRARKAGIKAIFGLEANIVEDKVPISYDPVDMDLHEATYVVFDVETTGLSAMNNDLIQIAASKMFKGNIVEQFDEFIDPGHPLSAFTTELTGITDKHLQGAKPLVTVLKAFQDFCKDSILVAHNASFDVGFMNANYERHDLPKITQPVIDTLEFARNLYPEYKRHGLGPLTKRFQVSLDHHHMANYDAEATGRLLFIFLRDAREKHGIKNLLQLNTDLVAEDSYKKARIKHATIYVQNQVGLKNMFKLVSLSNIKYFEGVPRIPRTVLDAHREGLLLGTACSDGEVFDAVLTKGIDAAVDLAKYYDFIEIMPPAIYQPLVVRELIKDQAGIEQVIRDLIEVGKRAKKPVLATGNVHYLEPEEEIYREIIVRSLGQGAMINRTIGRGEGAQPAPLPKAHFRTTNEMLDEFAFLGKDLAYQVVVQNTQDFADRIEEVEVVKGDLYTPYIDKAEETVAELTYQKAFEIYGNPLPDIIDLRIEKELTSILGNGFAVIYLASQMLVNRSNERGYLVGSRGSVGSSFVATMIGITEVNPMPPHYVCPSCQHSEFITDGSVGSGYDLPNKPCPKCGTPYQKDGQDIPFETFLGFDGDKVPDIDLNFSGDDQPSAHLDVRDIFGDEYAFRAGTVGTVAEKTAYGFVKGYERDYGKFYRDAEVDRLAAGAAGVKRTTGQHPGGIVVIPNYMDVYDFTPVQYPADDVTASWQTTHFNFHDIDENVLKLDILGHDDPTMIRKLQDLSGIDPITIPADDPGVMALFSGTEILGVTPEQIGTPTGMLGIPEFGTNFVRGMVNETHPTTFAELLQLSGLSHGTDVWLGNAQDLIKEGIATLKTVIGCRDDIMVYLMHAGLEPKMAFTIMERVRKGLWLKISEEERNGYIDAMRENNVPDWYIESCGKIKYMFPKAHAAAYVLMALRVAYFKVHHPIMYYCAYFSIRAKAFELKTMSGGLDAVKARMEDITIKRKNNEATNVENDLFTTLEIVNEMLERGFKFGKLDLYKSDAIEFQIKGDTLIPPFIALEGLGENVAKQIVKARQEGEFLSKMELRKRGGASSTLVEKMDEMSILGNMPEDNQLSLFDDFF.

One can recognise an Exonuclease domain in the interval 427 to 583 (YVVFDVETTG…YDAEATGRLL (157 aa)).

The protein belongs to the DNA polymerase type-C family. PolC subfamily.

The protein resides in the cytoplasm. The catalysed reaction is DNA(n) + a 2'-deoxyribonucleoside 5'-triphosphate = DNA(n+1) + diphosphate. In terms of biological role, required for replicative DNA synthesis. This DNA polymerase also exhibits 3' to 5' exonuclease activity. This is DNA polymerase III PolC-type from Streptococcus pyogenes serotype M12 (strain MGAS2096).